The chain runs to 1375 residues: DNA-directed RNA polymerase subunit beta (1375 aa).

Belongs to the RNA polymerase beta chain family. In terms of assembly, the RNAP catalytic core consists of 2 alpha, 1 beta, 1 beta' and 1 omega subunit. When a sigma factor is associated with the core the holoenzyme is formed, which can initiate transcription.

The catalysed reaction is RNA(n) + a ribonucleoside 5'-triphosphate = RNA(n+1) + diphosphate. In terms of biological role, DNA-dependent RNA polymerase catalyzes the transcription of DNA into RNA using the four ribonucleoside triphosphates as substrates. The polypeptide is DNA-directed RNA polymerase subunit beta (Methylibium petroleiphilum (strain ATCC BAA-1232 / LMG 22953 / PM1)).